The following is a 969-amino-acid chain: RNA polymerase-associated protein RapA (969 aa).

One can recognise a Helicase ATP-binding domain in the interval 164–334; it reads EVGRRHAPRV…FARLRLLDAD (171 aa). 177–184 is an ATP binding site; sequence DEVGLGKT. The DEAH box signature appears at 280–283; the sequence is DEAH. A Helicase C-terminal domain is found at 492–646; that stretch reads RVNWLLEKVK…TCPTGRAVYD (155 aa).

Belongs to the SNF2/RAD54 helicase family. RapA subfamily. As to quaternary structure, interacts with the RNAP. Has a higher affinity for the core RNAP than for the holoenzyme. Its ATPase activity is stimulated by binding to RNAP.

In terms of biological role, transcription regulator that activates transcription by stimulating RNA polymerase (RNAP) recycling in case of stress conditions such as supercoiled DNA or high salt concentrations. Probably acts by releasing the RNAP, when it is trapped or immobilized on tightly supercoiled DNA. Does not activate transcription on linear DNA. Probably not involved in DNA repair. The chain is RNA polymerase-associated protein RapA from Vibrio cholerae serotype O1 (strain ATCC 39315 / El Tor Inaba N16961).